The following is a 426-amino-acid chain: Glutamate-1-semialdehyde 2,1-aminomutase (426 aa).

Position 265 is an N6-(pyridoxal phosphate)lysine (Lys-265).

Belongs to the class-III pyridoxal-phosphate-dependent aminotransferase family. HemL subfamily. As to quaternary structure, homodimer. Pyridoxal 5'-phosphate serves as cofactor.

The protein resides in the cytoplasm. It carries out the reaction (S)-4-amino-5-oxopentanoate = 5-aminolevulinate. The protein operates within porphyrin-containing compound metabolism; protoporphyrin-IX biosynthesis; 5-aminolevulinate from L-glutamyl-tRNA(Glu): step 2/2. The polypeptide is Glutamate-1-semialdehyde 2,1-aminomutase (Hahella chejuensis (strain KCTC 2396)).